The chain runs to 378 residues: Transcription elongation factor TFIIS (378 aa).

An N-acetylmethionine modification is found at methionine 1. One can recognise a TFIIS N-terminal domain in the interval 10-89 (EGAKKAADAA…EIWKKVVIEE (80 aa)). The TFIIS central domain occupies 210–333 (VRDKIRELLV…DCERGLAAKA (124 aa)). A TFIIS-type zinc finger spans residues 336–376 (DQFKCGRCGQRKCTYYQMQTRSADEPMTTYVTCVNCDNHWK). Zn(2+)-binding residues include cysteine 340, cysteine 343, cysteine 368, and cysteine 371.

In terms of tissue distribution, expressed in roots, leaves and flowers.

The protein localises to the nucleus. In terms of biological role, necessary for efficient RNA polymerase II transcription elongation past template-encoded arresting sites. Involved in the control of seed dormancy and germination. In Arabidopsis thaliana (Mouse-ear cress), this protein is Transcription elongation factor TFIIS.